We begin with the raw amino-acid sequence, 623 residues long: (-)-alpha-pinene synthase 1, chloroplastic (623 aa).

The transit peptide at 1 to 52 (MDLISVLPSASKSCVCLHKPLSSSTHKLKPFCKTIRILGMPRRWKFAGPSMS) directs the protein to the chloroplast. Mg(2+) is bound by residues Asp-374, Asp-378, and Asp-526. Positions 374–378 (DDMYD) match the DDXXD motif motif.

It belongs to the terpene synthase family. Tpsd subfamily. Requires Mg(2+) as cofactor. Mn(2+) serves as cofactor.

The protein localises to the plastid. Its subcellular location is the chloroplast. It catalyses the reaction (2E)-geranyl diphosphate = (1S,5S)-alpha-pinene + diphosphate. The enzyme catalyses (2E)-geranyl diphosphate = (1S,5S)-beta-pinene + diphosphate. It carries out the reaction (2E)-geranyl diphosphate = (-)-beta-phellandrene + diphosphate. It participates in terpene metabolism; oleoresin biosynthesis. The protein operates within secondary metabolite biosynthesis; terpenoid biosynthesis. Functionally, monoterpene synthase (TPS) involved in the biosynthesis of monoterpene natural products included in conifer oleoresin secretions and volatile emissions; these compounds contribute to biotic and abiotic stress defense against herbivores and pathogens. Catalyzes the conversion of (2E)-geranyl diphosphate (GPP) to (-)-alpha-pinene and (-)-beta-pinene, and, to a lower extent, to (-)-beta-phellandrene. This Pinus banksiana (Jack pine) protein is (-)-alpha-pinene synthase 1, chloroplastic.